A 614-amino-acid chain; its full sequence is Signal recognition particle receptor subunit alpha homolog (614 aa).

Positions 119-244 (EASAKQVKAP…DRSRDSPDDV (126 aa)) are disordered. Residues 149 to 160 (QDDKKPVEKRVN) are compositionally biased toward basic and acidic residues. The segment covering 164–178 (APPPSKSQPSSPPTG) has biased composition (pro residues). The span at 232-241 (ALLDRSRDSP) shows a compositional bias: basic and acidic residues. Phosphoserine occurs at positions 237 and 240. The residue at position 246 (Tyr-246) is a Phosphotyrosine. Phosphoserine occurs at positions 268, 278, and 279. Positions 268 to 285 (SEDEADNEDASSEGEAEE) are enriched in acidic residues. Residues 268–290 (SEDEADNEDASSEGEAEEQVQSK) are disordered. Residues 396–613 (YTIIFCGVNG…NVNAVVNSLM (218 aa)) are NG domain. GTP contacts are provided by residues 402–409 (GVNGVGKS), 497–501 (DTAGR), and 565–568 (TKFD).

The protein belongs to the GTP-binding SRP family. In terms of assembly, heterodimer of SrpRalpha and SrpRbeta. In 8-9 hours embryos, expression is seen in a segmental pattern along embryonic ventral midline.

It localises to the endoplasmic reticulum membrane. Component of the SRP (signal recognition particle) receptor. Ensures, in conjunction with the signal recognition particle, the correct targeting of the nascent secretory proteins to the endoplasmic reticulum membrane system. Forms a guanosine 5'-triphosphate (GTP)-dependent complex with the SRP subunit Srp54. SRP receptor compaction and GTPase rearrangement drive SRP-mediated cotranslational protein translocation into the ER. May have a role in axonogenesis. The polypeptide is Signal recognition particle receptor subunit alpha homolog (Drosophila melanogaster (Fruit fly)).